The primary structure comprises 95 residues: Aspartyl/glutamyl-tRNA(Asn/Gln) amidotransferase subunit C (95 aa).

Belongs to the GatC family. In terms of assembly, heterotrimer of A, B and C subunits.

The catalysed reaction is L-glutamyl-tRNA(Gln) + L-glutamine + ATP + H2O = L-glutaminyl-tRNA(Gln) + L-glutamate + ADP + phosphate + H(+). The enzyme catalyses L-aspartyl-tRNA(Asn) + L-glutamine + ATP + H2O = L-asparaginyl-tRNA(Asn) + L-glutamate + ADP + phosphate + 2 H(+). Functionally, allows the formation of correctly charged Asn-tRNA(Asn) or Gln-tRNA(Gln) through the transamidation of misacylated Asp-tRNA(Asn) or Glu-tRNA(Gln) in organisms which lack either or both of asparaginyl-tRNA or glutaminyl-tRNA synthetases. The reaction takes place in the presence of glutamine and ATP through an activated phospho-Asp-tRNA(Asn) or phospho-Glu-tRNA(Gln). This chain is Aspartyl/glutamyl-tRNA(Asn/Gln) amidotransferase subunit C, found in Bradyrhizobium diazoefficiens (strain JCM 10833 / BCRC 13528 / IAM 13628 / NBRC 14792 / USDA 110).